The primary structure comprises 252 residues: tRNA-cytidine(32) 2-sulfurtransferase (252 aa).

Residues 37–42 (SGGKDS) carry the PP-loop motif motif. 3 residues coordinate [4Fe-4S] cluster: Cys-112, Cys-115, and Cys-202.

It belongs to the TtcA family. Homodimer. Requires Mg(2+) as cofactor. The cofactor is [4Fe-4S] cluster.

Its subcellular location is the cytoplasm. The catalysed reaction is cytidine(32) in tRNA + S-sulfanyl-L-cysteinyl-[cysteine desulfurase] + AH2 + ATP = 2-thiocytidine(32) in tRNA + L-cysteinyl-[cysteine desulfurase] + A + AMP + diphosphate + H(+). It participates in tRNA modification. Catalyzes the ATP-dependent 2-thiolation of cytidine in position 32 of tRNA, to form 2-thiocytidine (s(2)C32). The sulfur atoms are provided by the cysteine/cysteine desulfurase (IscS) system. The polypeptide is tRNA-cytidine(32) 2-sulfurtransferase (Geotalea uraniireducens (strain Rf4) (Geobacter uraniireducens)).